We begin with the raw amino-acid sequence, 89 residues long: uncharacterized protein (89 aa).

The first 19 residues, 1 to 19 (MIVRTLLIAAALLGGTAQA), serve as a signal peptide directing secretion.

The protein localises to the secreted. This is an uncharacterized protein from Pseudomonas aeruginosa (strain UCBPP-PA14).